We begin with the raw amino-acid sequence, 475 residues long: Ribosomal protein uS12 methylthiotransferase RimO (475 aa).

Residues Arg-5 to Ala-114 form the MTTase N-terminal domain. 6 residues coordinate [4Fe-4S] cluster: Cys-14, Cys-49, Cys-78, Cys-174, Cys-178, and Cys-181. Residues Leu-160–Asp-390 enclose the Radical SAM core domain. One can recognise a TRAM domain in the interval Arg-393–Thr-461.

It belongs to the methylthiotransferase family. RimO subfamily. Requires [4Fe-4S] cluster as cofactor.

Its subcellular location is the cytoplasm. It catalyses the reaction L-aspartate(89)-[ribosomal protein uS12]-hydrogen + (sulfur carrier)-SH + AH2 + 2 S-adenosyl-L-methionine = 3-methylsulfanyl-L-aspartate(89)-[ribosomal protein uS12]-hydrogen + (sulfur carrier)-H + 5'-deoxyadenosine + L-methionine + A + S-adenosyl-L-homocysteine + 2 H(+). In terms of biological role, catalyzes the methylthiolation of an aspartic acid residue of ribosomal protein uS12. In Acidothermus cellulolyticus (strain ATCC 43068 / DSM 8971 / 11B), this protein is Ribosomal protein uS12 methylthiotransferase RimO.